We begin with the raw amino-acid sequence, 138 residues long: MKIVYWSGTGNTEKMAELIAKGIIESGKDVNTINVSDVNIDELLNEDILILGCSAMGDEVLEESEFEPFIEEISTKISGKKVALFGSYGWGDGKWMRDFEERMNGYGCVVVETPLIVQNEPDEAEQDCIEFGKKIANI.

A Flavodoxin-like domain is found at 1–136 (MKIVYWSGTG…DCIEFGKKIA (136 aa)).

This sequence belongs to the flavodoxin family. It depends on FMN as a cofactor.

Low-potential electron donor to a number of redox enzymes. In Clostridium beijerinckii (Clostridium MP), this protein is Flavodoxin.